Here is a 311-residue protein sequence, read N- to C-terminus: MTDSESPTPKKSIPARFPKWLRQKLPLGRVFAQTDNTIKNKGLPTVCEEASCPNRTHCWSRHTATYLALGDACTRRCGFCDIDFTRNPLPPDPEEGAKIAESAKALGLKHIVITMVSRDDLEDGGASALVHIIETLHTELPTATIEVLASDFEGNIAALHHLLDTHIAIYNHNVETVERLTPFVRHKATYRRSLMMLENAAKYLPNLMTKSGIMVGLGEQESEVKQTLKDLADHGVKIVTIGQYLRPSRRHIPVKSYVSPETFDYYRSVGESLGLFIYAGPFVRSSFNADSVFEAMRQRETSTSSLLPNKD.

Residues Cys47, Cys52, Cys58, Cys73, Cys77, Cys80, and Ser286 each contribute to the [4Fe-4S] cluster site. Residues Trp59–Phe276 form the Radical SAM core domain.

Belongs to the radical SAM superfamily. Lipoyl synthase family. [4Fe-4S] cluster is required as a cofactor.

The protein resides in the cytoplasm. It carries out the reaction [[Fe-S] cluster scaffold protein carrying a second [4Fe-4S](2+) cluster] + N(6)-octanoyl-L-lysyl-[protein] + 2 oxidized [2Fe-2S]-[ferredoxin] + 2 S-adenosyl-L-methionine + 4 H(+) = [[Fe-S] cluster scaffold protein] + N(6)-[(R)-dihydrolipoyl]-L-lysyl-[protein] + 4 Fe(3+) + 2 hydrogen sulfide + 2 5'-deoxyadenosine + 2 L-methionine + 2 reduced [2Fe-2S]-[ferredoxin]. Its pathway is protein modification; protein lipoylation via endogenous pathway; protein N(6)-(lipoyl)lysine from octanoyl-[acyl-carrier-protein]: step 2/2. Catalyzes the radical-mediated insertion of two sulfur atoms into the C-6 and C-8 positions of the octanoyl moiety bound to the lipoyl domains of lipoate-dependent enzymes, thereby converting the octanoylated domains into lipoylated derivatives. The chain is Lipoyl synthase from Chlamydia trachomatis serovar L2 (strain ATCC VR-902B / DSM 19102 / 434/Bu).